The following is a 381-amino-acid chain: 1-deoxy-D-xylulose 5-phosphate reductoisomerase (381 aa).

Thr10, Gly11, Ser12, Ile13, and Asn120 together coordinate NADPH. Lys121 contributes to the 1-deoxy-D-xylulose 5-phosphate binding site. Glu122 provides a ligand contact to NADPH. Residue Asp146 participates in Mn(2+) binding. 1-deoxy-D-xylulose 5-phosphate contacts are provided by Ser147, Glu148, Ser172, and His195. Residue Glu148 participates in Mn(2+) binding. Residue Gly201 coordinates NADPH. Residues Ser208, Asn213, Lys214, and Glu217 each coordinate 1-deoxy-D-xylulose 5-phosphate. Glu217 serves as a coordination point for Mn(2+).

This sequence belongs to the DXR family. It depends on Mg(2+) as a cofactor. Requires Mn(2+) as cofactor.

The enzyme catalyses 2-C-methyl-D-erythritol 4-phosphate + NADP(+) = 1-deoxy-D-xylulose 5-phosphate + NADPH + H(+). Its pathway is isoprenoid biosynthesis; isopentenyl diphosphate biosynthesis via DXP pathway; isopentenyl diphosphate from 1-deoxy-D-xylulose 5-phosphate: step 1/6. Catalyzes the NADPH-dependent rearrangement and reduction of 1-deoxy-D-xylulose-5-phosphate (DXP) to 2-C-methyl-D-erythritol 4-phosphate (MEP). In Thermodesulfovibrio yellowstonii (strain ATCC 51303 / DSM 11347 / YP87), this protein is 1-deoxy-D-xylulose 5-phosphate reductoisomerase.